Here is a 428-residue protein sequence, read N- to C-terminus: Putative ankyrin repeat protein FPV234 (428 aa).

ANK repeat units follow at residues 6–35 (KDDI…DPNV), 39–68 (YQYS…DPNI), 71–100 (FFTP…IVNL), 103–132 (YCLK…DINS), 137–169 (NGKY…DINK), 174–202 (TNTS…NINI), 206–238 (MGRN…DINA), and 242–271 (EGNT…YLSY).

The chain is Putative ankyrin repeat protein FPV234 from Fowlpox virus (strain NVSL) (FPV).